The primary structure comprises 357 residues: Dynein axonemal assembly factor 10 (357 aa).

WD repeat units follow at residues 80 to 127, 132 to 170, 184 to 223, and 277 to 321; these read EFTN…IPIW, AHQG…NSAN, EQTN…IQST, and EPNQ…IDKV.

As to quaternary structure, interacts with PIH1D1; the interaction associates DNAAF10 with the R2TP complex. Interacts with several dynein axonemal assembly factors.

Its subcellular location is the dynein axonemal particle. In terms of biological role, key assembly factor specifically required for the stability of axonemal dynein heavy chains in cytoplasm. This Dictyostelium discoideum (Social amoeba) protein is Dynein axonemal assembly factor 10 (dnaaf10).